We begin with the raw amino-acid sequence, 296 residues long: MSLEPAMTTPDVLRVEVLSEALPYIQRFRGRRVVIKYGGAAMVREDLRDAVFRDVALLASVGVEPVVVHGGGPEINQWLNRLSIEPVFQEGLRVTCPDTMDVVEMVLVGRVNKQIVNGLNRVGGRAVGLSGADGGLVQARTHGDGSLGLVGDVAQVDPSVIIPLLDQGYIPVISSVAPNHEGQPYNINADTVAGELAAAMDAEKLILLTDTPGILRDRDDPESLIDQLSLSEARELIHAGVVAGGMVPKTECCIRALAQGVRAAHILDGRVPHSLLLEVFTNSGIGTMVLGSRQQG.

Substrate is bound by residues 71-72, Arg-93, and Asn-186; that span reads GG.

The protein belongs to the acetylglutamate kinase family. ArgB subfamily.

It localises to the cytoplasm. It carries out the reaction N-acetyl-L-glutamate + ATP = N-acetyl-L-glutamyl 5-phosphate + ADP. Its pathway is amino-acid biosynthesis; L-arginine biosynthesis; N(2)-acetyl-L-ornithine from L-glutamate: step 2/4. In terms of biological role, catalyzes the ATP-dependent phosphorylation of N-acetyl-L-glutamate. This Synechococcus sp. (strain RCC307) protein is Acetylglutamate kinase.